Consider the following 533-residue polypeptide: DnaJ homolog subfamily C member 21 (533 aa).

Positions 3 to 70 constitute a J domain; that stretch reads CHYEALGVRR…ERAWYDNHRE (68 aa). 3 disordered regions span residues 278–311, 327–473, and 503–533; these read QFGDGSGEDEAEDQELRDGQDGKDSDEAEDAELY, KAMR…RVPA, and KATGHARAPSSSTSLNSVTNSRNKKEKRKNR. Serine 283 and serine 302 each carry phosphoserine. Residues 291-302 show a composition bias toward basic and acidic residues; that stretch reads QELRDGQDGKDS. The C2H2-type 1 zinc finger occupies 315–339; the sequence is YCPACDKSFKTEKAMRNHEKSKKHR. Over residues 357–369 the composition is skewed to polar residues; sequence SGPQTDENSLNAN. The residue at position 370 (serine 370) is a Phosphoserine. Positions 381-392 are enriched in basic residues; that stretch reads KLSRKQKKKKQK. A compositionally biased stretch (polar residues) spans 393-403; the sequence is PAQNYDDNFNE. Residues 455 to 464 are compositionally biased toward basic residues; it reads SKPKGKKAKD. The segment at 484 to 508 adopts a C2H2-type 2 zinc-finger fold; it reads SCTTCHSEFPSRNKLFDHLKATGHA. Serine 512 is modified (phosphoserine). The segment covering 512-523 has biased composition (low complexity); it reads SSSTSLNSVTNS. The segment covering 524–533 has biased composition (basic residues); it reads RNKKEKRKNR.

Interacts with HSPA8, PA2G4 and ZNF622.

The protein resides in the cytoplasm. It is found in the nucleus. The protein localises to the nucleolus. Its function is as follows. May act as a co-chaperone for HSP70. May play a role in ribosomal RNA (rRNA) biogenesis, possibly in the maturation of the 60S subunit. Binds the precursor 45S rRNA. The polypeptide is DnaJ homolog subfamily C member 21 (DNAJC21) (Bos taurus (Bovine)).